The chain runs to 327 residues: Methionyl-tRNA formyltransferase (327 aa).

Position 111–114 (S111–P114) interacts with (6S)-5,6,7,8-tetrahydrofolate.

This sequence belongs to the Fmt family.

The catalysed reaction is L-methionyl-tRNA(fMet) + (6R)-10-formyltetrahydrofolate = N-formyl-L-methionyl-tRNA(fMet) + (6S)-5,6,7,8-tetrahydrofolate + H(+). Functionally, attaches a formyl group to the free amino group of methionyl-tRNA(fMet). The formyl group appears to play a dual role in the initiator identity of N-formylmethionyl-tRNA by promoting its recognition by IF2 and preventing the misappropriation of this tRNA by the elongation apparatus. This is Methionyl-tRNA formyltransferase from Synechococcus elongatus (strain ATCC 33912 / PCC 7942 / FACHB-805) (Anacystis nidulans R2).